Here is a 712-residue protein sequence, read N- to C-terminus: Probable serine/threonine-protein kinase fhkE (712 aa).

The FHA domain maps to 46–100 (ITFGRLKDSTVHYNDKSISGSHCKITRESNDDDGVVIAFIYDNSTNGTFIDNIKV). The 267-residue stretch at 145-411 (YFIGEMLGQG…CNNIIQHPWF (267 aa)) folds into the Protein kinase domain. Residues 151-159 (LGQGNFATV) and lysine 174 contribute to the ATP site. The Proton acceptor role is filled by aspartate 270. Positions 414 to 442 (NVKLSTLLEEDERLRKKAEAEVEANNNNT) form a coiled coil. Positions 431 to 695 (AEAEVEANNN…KCQYDPNCYR (265 aa)) are disordered. Low complexity-rich tracts occupy residues 436 to 446 (EANNNNTNKSN), 459 to 481 (GNCS…IKSN), 514 to 571 (NNDN…SNDT), 595 to 605 (NLQNHLNNNKI), and 616 to 639 (NNNN…NNNN). Over residues 669–678 (PQNSSNNNSG) the composition is skewed to polar residues.

The protein belongs to the protein kinase superfamily. CAMK Ser/Thr protein kinase family. CHK2 subfamily.

It carries out the reaction L-seryl-[protein] + ATP = O-phospho-L-seryl-[protein] + ADP + H(+). The enzyme catalyses L-threonyl-[protein] + ATP = O-phospho-L-threonyl-[protein] + ADP + H(+). The chain is Probable serine/threonine-protein kinase fhkE (fhkE) from Dictyostelium discoideum (Social amoeba).